Reading from the N-terminus, the 363-residue chain is Homeobox protein Hox-A2a (363 aa).

4 disordered regions span residues 30–88 (DSFQ…LPPE), 98–117 (SKRNHLPNSTTTTISNGPVC), 189–220 (RMKHKRQTQSKENHNAEGKGPSTEEGIHSDEE), and 268–308 (DKNL…LDVS). Residues 31 to 44 (SFQSSSIKSSTLSR) show a composition bias toward polar residues. Residues 88-93 (EYPWMR) carry the Antp-type hexapeptide motif. Over residues 103 to 113 (LPNSTTTTISN) the composition is skewed to polar residues. The homeobox DNA-binding region spans 137 to 196 (SRRLRTAYTNTQLLELEKEFHFNKYLCRPRRVEIAALLDLTERQVKVWFQNRRMKHKRQT).

The protein belongs to the Antp homeobox family. Proboscipedia subfamily.

It is found in the nucleus. Functionally, sequence-specific transcription factor which is part of a developmental regulatory system that provides cells with specific positional identities on the anterior-posterior axis. The protein is Homeobox protein Hox-A2a (hoxa2a) of Takifugu rubripes (Japanese pufferfish).